A 299-amino-acid chain; its full sequence is tRNA dimethylallyltransferase (299 aa).

ATP is bound at residue 11–18 (GPTAVGKT). 13–18 (TAVGKT) lines the substrate pocket. The segment at 36–39 (DSQQ) is interaction with substrate tRNA.

The protein belongs to the IPP transferase family. Monomer. It depends on Mg(2+) as a cofactor.

It carries out the reaction adenosine(37) in tRNA + dimethylallyl diphosphate = N(6)-dimethylallyladenosine(37) in tRNA + diphosphate. Functionally, catalyzes the transfer of a dimethylallyl group onto the adenine at position 37 in tRNAs that read codons beginning with uridine, leading to the formation of N6-(dimethylallyl)adenosine (i(6)A). The protein is tRNA dimethylallyltransferase of Streptococcus pyogenes serotype M18 (strain MGAS8232).